A 398-amino-acid polypeptide reads, in one-letter code: Acetate kinase (398 aa).

Position 8 (asparagine 8) interacts with Mg(2+). Lysine 15 contributes to the ATP binding site. Arginine 90 contributes to the substrate binding site. The active-site Proton donor/acceptor is the aspartate 147. ATP is bound by residues 207–211, 282–284, and 330–334; these read HIGAG, DMR, and GVGEN. Glutamate 383 lines the Mg(2+) pocket.

The protein belongs to the acetokinase family. In terms of assembly, homodimer. Mg(2+) is required as a cofactor. Mn(2+) serves as cofactor.

Its subcellular location is the cytoplasm. It carries out the reaction acetate + ATP = acetyl phosphate + ADP. It participates in metabolic intermediate biosynthesis; acetyl-CoA biosynthesis; acetyl-CoA from acetate: step 1/2. Functionally, catalyzes the formation of acetyl phosphate from acetate and ATP. Can also catalyze the reverse reaction. The sequence is that of Acetate kinase from Limosilactobacillus fermentum (strain NBRC 3956 / LMG 18251) (Lactobacillus fermentum).